We begin with the raw amino-acid sequence, 258 residues long: 5'-nucleotidase SurE (258 aa).

Positions 13, 14, 44, and 92 each coordinate a divalent metal cation. Positions 237–258 are disordered; it reads SPLTAPHSTEHHDALDGIATEF.

It belongs to the SurE nucleotidase family. A divalent metal cation is required as a cofactor.

It is found in the cytoplasm. The catalysed reaction is a ribonucleoside 5'-phosphate + H2O = a ribonucleoside + phosphate. Its function is as follows. Nucleotidase that shows phosphatase activity on nucleoside 5'-monophosphates. The chain is 5'-nucleotidase SurE from Halobacterium salinarum (strain ATCC 29341 / DSM 671 / R1).